Consider the following 94-residue polypeptide: Lipolysis-activating peptide 1-beta chain (94 aa).

A signal peptide spans 1–19 (MKILAVVLISVIVLNTANG). In terms of domain architecture, LCN-type CS-alpha/beta spans 20-87 (ENYYPQKYTN…FFNALESQCP (68 aa)). 3 cysteine pairs are disulfide-bonded: C34/C56, C42/C66, and C46/C68.

The protein belongs to the long (3 C-C) scorpion toxin superfamily. In terms of assembly, homodimer; disulfide-linked or monomer (edited version) or heterodimer of an alpha chain (AC D9U299 or AC D9U2A4) and this beta chain (non-edited version). As to expression, expressed by the venom gland.

The protein localises to the secreted. In terms of biological role, the homodimer inhibits HMG-CoA reductase (HMGCR) (32% of inhibition produced by 0.6 uM), a glycoprotein involved in the control of cholesterol biosynthesis. The inhibitory effects of bumarsin are seen at much lower concentrations (0.6 uM) than that for statins such as atorvastatin (5 mM) and simvastatin (10 uM). In addition to inhibition of HMG-CoA reductase, this protein lowers cholesterol levels by inducing steroid hormone synthesis via StAR, and by increasing reverse cholesterol transport mediated by the induction of ABCA1 and APOA1. Its function is as follows. The heterodimer non-edited LVP1 induces lipolysis in rat adipocytes. Induction of lipolysis by LVP1 appears to be mediated through the beta-2 adrenergic receptor pathway (ADRB2). The monomer edited version, similar to alpha-toxins, may modulate voltage-gated sodium channels (Nav) and may block voltage-gated potassium channels (Kv). The polypeptide is Lipolysis-activating peptide 1-beta chain (Lychas mucronatus (Chinese swimming scorpion)).